The primary structure comprises 339 residues: Ketol-acid reductoisomerase (NADP(+)) (339 aa).

A KARI N-terminal Rossmann domain is found at M1 to T182. NADP(+) is bound by residues Y24–Q27, K48, S51, T53, and D83–Q86. The active site involves H108. G134 contributes to the NADP(+) binding site. Residues N183–I328 form the KARI C-terminal knotted domain. Mg(2+) contacts are provided by D191, E195, E227, and E231. Substrate is bound at residue S252.

Belongs to the ketol-acid reductoisomerase family. The cofactor is Mg(2+).

The catalysed reaction is (2R)-2,3-dihydroxy-3-methylbutanoate + NADP(+) = (2S)-2-acetolactate + NADPH + H(+). The enzyme catalyses (2R,3R)-2,3-dihydroxy-3-methylpentanoate + NADP(+) = (S)-2-ethyl-2-hydroxy-3-oxobutanoate + NADPH + H(+). The protein operates within amino-acid biosynthesis; L-isoleucine biosynthesis; L-isoleucine from 2-oxobutanoate: step 2/4. Its pathway is amino-acid biosynthesis; L-valine biosynthesis; L-valine from pyruvate: step 2/4. Its function is as follows. Involved in the biosynthesis of branched-chain amino acids (BCAA). Catalyzes an alkyl-migration followed by a ketol-acid reduction of (S)-2-acetolactate (S2AL) to yield (R)-2,3-dihydroxy-isovalerate. In the isomerase reaction, S2AL is rearranged via a Mg-dependent methyl migration to produce 3-hydroxy-3-methyl-2-ketobutyrate (HMKB). In the reductase reaction, this 2-ketoacid undergoes a metal-dependent reduction by NADPH to yield (R)-2,3-dihydroxy-isovalerate. In Rhizobium johnstonii (strain DSM 114642 / LMG 32736 / 3841) (Rhizobium leguminosarum bv. viciae), this protein is Ketol-acid reductoisomerase (NADP(+)).